The chain runs to 318 residues: MRIVFMGTPDFAVPSLQRIASENHDFEIVLVVTGRDKPRRKKNALPEPTPVKQSALELGLPVYETDDPSSAEFASVVLASRPDVIVVAAFRILPPAVFSIARLGAFNLHASLLPAYRGAAPINWAIIRGEKVTGVTTFFLQEKVDTGSMILTENVTIAEDDNATRLAEKLSVKGAALVVETLHLINAGNVSVKKQDDSLASKAPKLTKENTRIRWNSRSAELCDFIRGLAMKPAAWTTMDGKTLKVYKAVPLESPISLPERGREPGLVYIDDSRLLVGTVDGWISLQQLQLEGKKIMEAQEFLRGFRYENREQPLLLL.

111–114 (SLLP) serves as a coordination point for (6S)-5,6,7,8-tetrahydrofolate.

This sequence belongs to the Fmt family.

It catalyses the reaction L-methionyl-tRNA(fMet) + (6R)-10-formyltetrahydrofolate = N-formyl-L-methionyl-tRNA(fMet) + (6S)-5,6,7,8-tetrahydrofolate + H(+). Its function is as follows. Attaches a formyl group to the free amino group of methionyl-tRNA(fMet). The formyl group appears to play a dual role in the initiator identity of N-formylmethionyl-tRNA by promoting its recognition by IF2 and preventing the misappropriation of this tRNA by the elongation apparatus. The polypeptide is Methionyl-tRNA formyltransferase (Chlorobium limicola (strain DSM 245 / NBRC 103803 / 6330)).